The following is a 299-amino-acid chain: Cytosolic sulfotransferase 1 (299 aa).

Residue 51 to 56 (KAGTTW) participates in 3'-phosphoadenylyl sulfate binding. The active-site Proton acceptor is the His113. 3'-phosphoadenylyl sulfate is bound by residues Arg135, Ser143, Tyr199, 233 to 238 (VQFDAM), and 261 to 263 (RKG).

Belongs to the sulfotransferase 1 family. As to expression, expressed in liver.

The protein localises to the cytoplasm. Inhibited by Co(2+), Zn(2+), Cd(2+) and Pb(2+) ions. Inactivated by Hg(2+) and Cu(2+) ions. Sulfotransferase that utilizes 3'-phospho-5'-adenylyl sulfate (PAPS) as sulfonate donor to catalyze the sulfate conjugation of a variety of xenobiotic and endogenous compounds, including 2-naphthol, hydroxychlorobiphenyls, dopamine and T3 (triiodo-L-thyronine). This is Cytosolic sulfotransferase 1 from Danio rerio (Zebrafish).